Consider the following 1487-residue polypeptide: Collagen alpha-1(II) chain (1487 aa).

The first 25 residues, 1 to 25, serve as a signal peptide directing secretion; the sequence is MIRLGAPQTLVLLTLLVAAVLRCQG. Positions 26–181 are cleaved as a propeptide — N-terminal propeptide; that stretch reads QDVQEAGSCV…PPGLGGNFAA (156 aa). In terms of domain architecture, VWFC spans 32–90; it reads GSCVQDGQRYNDKDVWKPEPCRICVCDTGTVLCDDIICEDVKDCLSPEIPFGECCPICP. Positions 97–1237 are disordered; the sequence is SGQPGPKGQK…PREKGPDPLQ (1141 aa). 2 stretches are compositionally biased toward basic and acidic residues: residues 105–116 and 133–154; these read QKGEPGDIKDIV and PRGD…RDGE. A compositionally biased stretch (pro residues) spans 158–173; it reads PGNPGPPGPPGPPGPP. K190 is subject to 5-hydroxylysine. K190 carries an O-linked (Gal...) hydroxylysine glycan. The interval 201 to 1214 is triple-helical region; sequence GPMGPMGPRG…PGPPGPPGPP (1014 aa). The segment covering 208–217 has biased composition (pro residues); sequence PRGPPGPAGA. A compositionally biased stretch (low complexity) spans 218–239; sequence PGPQGFQGNPGEPGEPGVSGPM. Positions 241-250 are enriched in pro residues; that stretch reads PRGPPGPPGK. Residues 251–265 show a composition bias toward basic and acidic residues; the sequence is PGDDGEAGKPGKAGE. K287, K299, and K308 each carry 5-hydroxylysine. K287, K299, and K308 each carry an O-linked (Gal...) hydroxylysine glycan. 2 stretches are compositionally biased toward low complexity: residues 310 to 320 and 335 to 350; these read ESGSPGENGSP and TGPA…DGQP. Positions 360-369 are enriched in gly residues; the sequence is GPAGGPGFPG. Composition is skewed to low complexity over residues 370 to 382 and 391 to 431; these read APGA…PTGA and PRGE…AGAP. Residue K374 is modified to 5-hydroxylysine. A glycan (O-linked (Gal...) hydroxylysine) is linked at K374. Positions 433-442 are enriched in pro residues; it reads FPGPRGPPGP. 5-hydroxylysine occurs at positions 608 and 620. O-linked (Gal...) hydroxylysine glycans are attached at residues K608 and K620. 2 stretches are compositionally biased toward low complexity: residues 622 to 631 and 656 to 667; these read LPGAPGLRGL and QGAPGPSGFQGL. P659 and P668 each carry 4-hydroxyproline. 3-hydroxyproline is present on P670. 4-hydroxyproline occurs at positions 671 and 674. Over residues 764–775 the composition is skewed to basic and acidic residues; sequence KGDRGDVGEKGP. Composition is skewed to low complexity over residues 833-848 and 877-913; these read AGFA…PGAK and PTGV…SNGN. P907 carries the 3-hydroxyproline modification. 4-hydroxyproline is present on residues P908, P914, and P920. The segment covering 1069 to 1079 has biased composition (pro residues); sequence APGPPGSPGPA. Positions 1115–1129 are enriched in basic and acidic residues; that stretch reads RGDKGEAGEPGERGL. Residue K1130 is modified to 5-hydroxylysine. Residue K1130 is glycosylated (O-linked (Gal...) hydroxylysine). P1144 is modified (3-hydroxyproline). The segment covering 1148-1157 has biased composition (low complexity); sequence SGDQGASGPA. 4-hydroxyproline is present on P1181. P1186 carries the 3-hydroxyproline modification. P1187 bears the 4-hydroxyproline mark. Over residues 1199–1216 the composition is skewed to pro residues; that stretch reads AGPPGNPGPPGPPGPPGP. A 3-hydroxyproline modification is found at P1201. 4-hydroxyproline is present on residues P1202 and P1205. A 3-hydroxyproline modification is found at P1207. P1208 and P1211 each carry 4-hydroxyproline. Residue P1213 is modified to 3-hydroxyproline. Position 1214 is a 4-hydroxyproline (P1214). The tract at residues 1215–1241 is nonhelical region (C-terminal); the sequence is GPGIDMSAFAGLGPREKGPDPLQYMRA. Residues 1253–1487 enclose the Fibrillar collagen NC1 domain; sequence AEVDATLKSL…GVDIGPVCFL (235 aa). 3 disulfide bridges follow: C1283–C1315, C1323–C1485, and C1393–C1438. Ca(2+) is bound by residues D1301, N1303, Q1304, C1306, and D1309. Residue N1388 is glycosylated (N-linked (GlcNAc...) asparagine).

This sequence belongs to the fibrillar collagen family. In terms of assembly, homotrimers of alpha 1(II) chains. In terms of processing, the N-telopeptide is covalently linked to the helical COL2 region of alpha 1(IX), alpha 2(IX) and alpha 3(IX) chain. The C-telopeptide is covalently linked to an another site in the helical region of alpha 3(IX) COL2. Contains mostly 4-hydroxyproline. Prolines at the third position of the tripeptide repeating unit (G-X-P) are 4-hydroxylated in some or all of the chains. Post-translationally, contains 3-hydroxyproline at a few sites. This modification occurs on the first proline residue in the sequence motif Gly-Pro-Hyp, where Hyp is 4-hydroxyproline. In terms of processing, lysine residues at the third position of the tripeptide repeating unit (G-X-Y) are 5-hydroxylated in some or all of the chains. O-glycosylated on hydroxylated lysine residues. The O-linked glycan consists of a Glc-Gal disaccharide. Isoform 2 is highly expressed in juvenile chondrocyte and low in fetal chondrocyte.

Its subcellular location is the secreted. The protein resides in the extracellular space. The protein localises to the extracellular matrix. Functionally, type II collagen is specific for cartilaginous tissues. It is essential for the normal embryonic development of the skeleton, for linear growth and for the ability of cartilage to resist compressive forces. The protein is Collagen alpha-1(II) chain of Homo sapiens (Human).